Here is a 591-residue protein sequence, read N- to C-terminus: L-fucose isomerase (591 aa).

Catalysis depends on proton acceptor residues Glu337 and Asp361. Glu337, Asp361, and His528 together coordinate Mn(2+).

The protein belongs to the L-fucose isomerase family. As to quaternary structure, homohexamer. Requires Mn(2+) as cofactor.

Its subcellular location is the cytoplasm. The enzyme catalyses L-fucose = L-fuculose. The protein operates within carbohydrate degradation; L-fucose degradation; L-lactaldehyde and glycerone phosphate from L-fucose: step 1/3. Its function is as follows. Converts the aldose L-fucose into the corresponding ketose L-fuculose. In Klebsiella pneumoniae subsp. pneumoniae (strain ATCC 700721 / MGH 78578), this protein is L-fucose isomerase.